We begin with the raw amino-acid sequence, 296 residues long: MTELASPTSFSMPDIGKSPVVLTARRLMRHRSFRIGLVLLLIVVLAAVLAPWITNGKPNATSVRMRFQPPGLEHLFGTDNFGRDLWTRVLYGAQVSLWIGLTVAVLSAILGAIIGIAAAWYRRFDTLLMRVMDALMAFPAILLAIGISAALGPHLSSVIIALTSAYIPRCARIVRASALVLRETDYVDAARLAGASDLRIITRHILPNCLAPLLVTLTFVFAYAILAEATLSFLGIGTPPPHASWGSIVAQGRDYSVDAWWIMLFPGIAITISALAINLIGDGLRDVLDPRLKMEG.

6 helical membrane passes run 35-55, 97-117, 131-151, 205-225, 229-249, and 260-280; these read IGLV…WITN, LWIG…IGIA, VMDA…SAAL, ILPN…AYAI, ATLS…GSIV, and WWIM…INLI. An ABC transmembrane type-1 domain is found at 97-281; that stretch reads LWIGLTVAVL…ISALAINLIG (185 aa).

This sequence belongs to the binding-protein-dependent transport system permease family. The complex is composed of two ATP-binding proteins (BruAb2_1033 and BruAb2_1034), two transmembrane proteins (BruAb2_1031 and BruAb2_1032) and a solute-binding protein (BruAb2_1030).

It is found in the cell inner membrane. In terms of biological role, probably part of an ABC transporter complex that could be involved in peptide import. Probably responsible for the translocation of the substrate across the membrane. The sequence is that of Putative peptide transport system permease protein BruAb2_1032 from Brucella abortus biovar 1 (strain 9-941).